We begin with the raw amino-acid sequence, 356 residues long: Heat-inducible transcription repressor HrcA (356 aa).

Belongs to the HrcA family.

Its function is as follows. Negative regulator of class I heat shock genes (grpE-dnaK-dnaJ and groELS operons). Prevents heat-shock induction of these operons. The polypeptide is Heat-inducible transcription repressor HrcA (Gluconobacter oxydans (strain 621H) (Gluconobacter suboxydans)).